Here is a 188-residue protein sequence, read N- to C-terminus: Urease accessory protein UreE (188 aa).

Residues Ala142 to Ser174 form a disordered region. Over residues His157–Ala172 the composition is skewed to basic and acidic residues.

This sequence belongs to the UreE family.

It localises to the cytoplasm. Its function is as follows. Involved in urease metallocenter assembly. Binds nickel. Probably functions as a nickel donor during metallocenter assembly. The protein is Urease accessory protein UreE of Tolumonas auensis (strain DSM 9187 / NBRC 110442 / TA 4).